Consider the following 289-residue polypeptide: Ribosomal protein L11 methyltransferase (289 aa).

S-adenosyl-L-methionine contacts are provided by Thr142, Gly163, Asp185, and Asn226.

This sequence belongs to the methyltransferase superfamily. PrmA family.

The protein localises to the cytoplasm. The enzyme catalyses L-lysyl-[protein] + 3 S-adenosyl-L-methionine = N(6),N(6),N(6)-trimethyl-L-lysyl-[protein] + 3 S-adenosyl-L-homocysteine + 3 H(+). Its function is as follows. Methylates ribosomal protein L11. This chain is Ribosomal protein L11 methyltransferase, found in Legionella pneumophila (strain Lens).